The sequence spans 240 residues: Anti-H(O) lectin (240 aa).

N-linked (GlcNAc...) asparagine glycosylation occurs at asparagine 4. The Mn(2+) site is built by glutamate 124 and aspartate 126. The Ca(2+) site is built by aspartate 126, tyrosine 128, asparagine 130, and aspartate 133. 2 residues coordinate Mn(2+): aspartate 133 and histidine 141.

Belongs to the leguminous lectin family.

L-fucose specific lectin. The polypeptide is Anti-H(O) lectin (Lotus tetragonolobus (Winged pea)).